The primary structure comprises 384 residues: Deoxyguanosinetriphosphate triphosphohydrolase-like protein (384 aa).

Residues 12–39 (ELASYASDPSKTRGRRHSEPPPENRTEF) form a disordered region. The segment covering 28–39 (HSEPPPENRTEF) has biased composition (basic and acidic residues). The region spanning 73 to 208 (RLTHSLEVAQ…ANLADEVAYN (136 aa)) is the HD domain.

The protein belongs to the dGTPase family. Type 2 subfamily.

This chain is Deoxyguanosinetriphosphate triphosphohydrolase-like protein, found in Bordetella parapertussis (strain 12822 / ATCC BAA-587 / NCTC 13253).